The following is a 586-amino-acid chain: Kelch-like protein 7 (586 aa).

Positions 44–111 (CDVILMVQER…AYTARISVNS (68 aa)) constitute a BTB domain. Positions 146 to 248 (CLGISVLAEC…SKNFLSKTVQ (103 aa)) constitute a BACK domain. Kelch repeat units lie at residues 294-336 (RIAL…FWDN), 337-382 (VVYI…AAEG), 383-430 (KIYT…EANG), 431-481 (LIYV…FVKD), 483-528 (IFAV…AVGS), and 530-575 (VYVL…CVVD).

In terms of assembly, homodimer. Component of the BCR(KLHL7) E3 ubiquitin ligase complex.

Its subcellular location is the nucleus. It localises to the cytoplasm. The protein operates within protein modification; protein ubiquitination. Substrate-specific adapter of a BCR (BTB-CUL3-RBX1) E3 ubiquitin ligase complex. The BCR(KLHL7) complex acts by mediating ubiquitination and subsequent degradation of substrate proteins. Probably mediates 'Lys-48'-linked ubiquitination. This chain is Kelch-like protein 7 (KLHL7), found in Gallus gallus (Chicken).